A 142-amino-acid chain; its full sequence is MAKKVAGQLKLQVKAGSANPSPPIGPALGQRGINIMEFCKAFNAATQEMEKGMPIPVVITYYQDKSFTFVMKQPPVSYFLKREAKVQAGSKTPGKAKAGSISKAQIRTIAEAKMKDLNAADIDGAMAMVEGSARSMGLEVTG.

It belongs to the universal ribosomal protein uL11 family. As to quaternary structure, part of the ribosomal stalk of the 50S ribosomal subunit. Interacts with L10 and the large rRNA to form the base of the stalk. L10 forms an elongated spine to which L12 dimers bind in a sequential fashion forming a multimeric L10(L12)X complex. In terms of processing, one or more lysine residues are methylated.

Its function is as follows. Forms part of the ribosomal stalk which helps the ribosome interact with GTP-bound translation factors. This chain is Large ribosomal subunit protein uL11, found in Rhizobium meliloti (strain 1021) (Ensifer meliloti).